Reading from the N-terminus, the 290-residue chain is Membrane-spanning 4-domains subfamily A member 8 (290 aa).

The span at 1–21 shows a compositional bias: polar residues; the sequence is MNRPTAQGAVNLSGSKFSTAK. The tract at residues 1-25 is disordered; sequence MNRPTAQGAVNLSGSKFSTAKSWEP. At 1–108 the chain is on the cytoplasmic side; sequence MNRPTAQGAV…PAQRVLKKGQ (108 aa). The chain crosses the membrane as a helical span at residues 109 to 129; sequence VLGAIQILIGLVHIGLGSIMI. At 130-138 the chain is on the extracellular side; sequence TNLFSHYTP. Residues 139–159 traverse the membrane as a helical segment; it reads VSLYGGFPFWGGIWFIISGSL. The Cytoplasmic portion of the chain corresponds to 160–174; the sequence is SVAAETQPNSPCLLN. The chain crosses the membrane as a helical span at residues 175–195; it reads GSVGLNIFSAICSAVGIMLFI. Residues 196–220 are Extracellular-facing; the sequence is TDISISSGYIYPSYYPYQENLGVRT. The helical transmembrane segment at 221–241 threads the bilayer; the sequence is GVAISSVLLIFCLLELSIASV. The Cytoplasmic portion of the chain corresponds to 242-290; sequence SSHFGCQVACCHYNNPGVVIPNVYAANPVVIPEPPNPIPSYSEVVQDSR.

Belongs to the MS4A family. In terms of tissue distribution, expressed strongly in intestine and colon and minimally in lung and ovary.

The protein localises to the membrane. In terms of biological role, may be involved in signal transduction as a component of a multimeric receptor complex. In Mus musculus (Mouse), this protein is Membrane-spanning 4-domains subfamily A member 8 (Ms4a8).